Consider the following 284-residue polypeptide: Tropomyosin (284 aa).

Residues 1–284 (MDGIKKKMIA…DQTFAELTGY (284 aa)) adopt a coiled-coil conformation. 2 stretches are compositionally biased toward basic and acidic residues: residues 29–42 (LKQKEEEQEKKETE) and 111–136 (AKFDEASKTAEESERGRKELEIRSIA). Disordered stretches follow at residues 29–49 (LKQKEEEQEKKETEIGELNNR) and 111–149 (AKFDEASKTAEESERGRKELEIRSIADDEGLSQLEDQQK).

The protein belongs to the tropomyosin family.

In terms of biological role, tropomyosin, in association with the troponin complex, plays a central role in the calcium dependent regulation of muscle contraction. The polypeptide is Tropomyosin (Clonorchis sinensis (Chinese liver fluke)).